Consider the following 442-residue polypeptide: NADH-quinone oxidoreductase subunit D (442 aa).

This sequence belongs to the complex I 49 kDa subunit family. In terms of assembly, NDH-1 is composed of 14 different subunits. Subunits NuoB, C, D, E, F, and G constitute the peripheral sector of the complex.

The protein localises to the cell membrane. The catalysed reaction is a quinone + NADH + 5 H(+)(in) = a quinol + NAD(+) + 4 H(+)(out). Functionally, NDH-1 shuttles electrons from NADH, via FMN and iron-sulfur (Fe-S) centers, to quinones in the respiratory chain. The immediate electron acceptor for the enzyme in this species is believed to be a menaquinone. Couples the redox reaction to proton translocation (for every two electrons transferred, four hydrogen ions are translocated across the cytoplasmic membrane), and thus conserves the redox energy in a proton gradient. The sequence is that of NADH-quinone oxidoreductase subunit D from Mycolicibacterium smegmatis (strain ATCC 700084 / mc(2)155) (Mycobacterium smegmatis).